Consider the following 237-residue polypeptide: Leucyl/phenylalanyl-tRNA--protein transferase (237 aa).

This sequence belongs to the L/F-transferase family.

It localises to the cytoplasm. The enzyme catalyses N-terminal L-lysyl-[protein] + L-leucyl-tRNA(Leu) = N-terminal L-leucyl-L-lysyl-[protein] + tRNA(Leu) + H(+). The catalysed reaction is N-terminal L-arginyl-[protein] + L-leucyl-tRNA(Leu) = N-terminal L-leucyl-L-arginyl-[protein] + tRNA(Leu) + H(+). It catalyses the reaction L-phenylalanyl-tRNA(Phe) + an N-terminal L-alpha-aminoacyl-[protein] = an N-terminal L-phenylalanyl-L-alpha-aminoacyl-[protein] + tRNA(Phe). Functionally, functions in the N-end rule pathway of protein degradation where it conjugates Leu, Phe and, less efficiently, Met from aminoacyl-tRNAs to the N-termini of proteins containing an N-terminal arginine or lysine. This Photobacterium profundum (strain SS9) protein is Leucyl/phenylalanyl-tRNA--protein transferase.